We begin with the raw amino-acid sequence, 88 residues long: UPF0297 protein str1959 (88 aa).

Belongs to the UPF0297 family.

The protein is UPF0297 protein str1959 of Streptococcus thermophilus (strain CNRZ 1066).